Here is a 454-residue protein sequence, read N- to C-terminus: tRNA modification GTPase MnmE (454 aa).

Residues R23, E80, and K120 each contribute to the (6S)-5-formyl-5,6,7,8-tetrahydrofolate site. Residues 216–377 (GMKVVIAGRP…LRDHLKQSMG (162 aa)) form the TrmE-type G domain. N226 is a K(+) binding site. GTP-binding positions include 226-231 (NAGKSS), 245-251 (TDIAGTT), 270-273 (DTAG), 335-338 (NKAD), and 358-360 (SAR). S230 is a binding site for Mg(2+). T245, I247, and T250 together coordinate K(+). T251 is a Mg(2+) binding site. Residue K454 participates in (6S)-5-formyl-5,6,7,8-tetrahydrofolate binding.

This sequence belongs to the TRAFAC class TrmE-Era-EngA-EngB-Septin-like GTPase superfamily. TrmE GTPase family. As to quaternary structure, homodimer. Heterotetramer of two MnmE and two MnmG subunits. K(+) serves as cofactor.

The protein resides in the cytoplasm. In terms of biological role, exhibits a very high intrinsic GTPase hydrolysis rate. Involved in the addition of a carboxymethylaminomethyl (cmnm) group at the wobble position (U34) of certain tRNAs, forming tRNA-cmnm(5)s(2)U34. The sequence is that of tRNA modification GTPase MnmE from Pectobacterium carotovorum subsp. carotovorum (strain PC1).